Here is a 252-residue protein sequence, read N- to C-terminus: Triosephosphate isomerase (252 aa).

Position 10–12 (asparagine 10–lysine 12) interacts with substrate. Histidine 96 (electrophile) is an active-site residue. The active-site Proton acceptor is the glutamate 168. Substrate contacts are provided by residues glycine 174, serine 214, and glycine 235–glycine 236.

This sequence belongs to the triosephosphate isomerase family. Homodimer.

The protein localises to the cytoplasm. It catalyses the reaction D-glyceraldehyde 3-phosphate = dihydroxyacetone phosphate. The protein operates within carbohydrate biosynthesis; gluconeogenesis. Its pathway is carbohydrate degradation; glycolysis; D-glyceraldehyde 3-phosphate from glycerone phosphate: step 1/1. Involved in the gluconeogenesis. Catalyzes stereospecifically the conversion of dihydroxyacetone phosphate (DHAP) to D-glyceraldehyde-3-phosphate (G3P). The chain is Triosephosphate isomerase from Streptococcus gordonii (strain Challis / ATCC 35105 / BCRC 15272 / CH1 / DL1 / V288).